The chain runs to 452 residues: UDP-N-acetylmuramoylalanine--D-glutamate ligase (452 aa).

Residue Gly-119–Thr-125 participates in ATP binding.

The protein belongs to the MurCDEF family.

It is found in the cytoplasm. It catalyses the reaction UDP-N-acetyl-alpha-D-muramoyl-L-alanine + D-glutamate + ATP = UDP-N-acetyl-alpha-D-muramoyl-L-alanyl-D-glutamate + ADP + phosphate + H(+). Its pathway is cell wall biogenesis; peptidoglycan biosynthesis. In terms of biological role, cell wall formation. Catalyzes the addition of glutamate to the nucleotide precursor UDP-N-acetylmuramoyl-L-alanine (UMA). The sequence is that of UDP-N-acetylmuramoylalanine--D-glutamate ligase from Streptococcus pyogenes serotype M2 (strain MGAS10270).